Reading from the N-terminus, the 353-residue chain is Photosystem II protein D1 (353 aa).

T2 is modified (N-acetylthreonine). T2 bears the Phosphothreonine mark. 3 consecutive transmembrane segments (helical) span residues 29–46, 118–133, and 142–156; these read YIGW…TATS, HFFI…EWEL, and WIAV…AATA. H118 contributes to the chlorophyll a binding site. Y126 contacts pheophytin a. [CaMn4O5] cluster is bound by residues D170 and E189. Residues 197 to 218 form a helical membrane-spanning segment; that stretch reads FHMLGVAGVFGGSLFSAMHGSL. H198 is a binding site for chlorophyll a. Residues H215 and 264–265 contribute to the a quinone site; that span reads SF. H215 provides a ligand contact to Fe cation. H272 is a binding site for Fe cation. Residues 274–288 form a helical membrane-spanning segment; the sequence is FLAIWPVMGIWFTAL. The [CaMn4O5] cluster site is built by H332, E333, D342, and A344. Residues 345 to 353 constitute a propeptide that is removed on maturation; sequence SVEAPSINA.

The protein belongs to the reaction center PufL/M/PsbA/D family. As to quaternary structure, PSII is composed of 1 copy each of membrane proteins PsbA, PsbB, PsbC, PsbD, PsbE, PsbF, PsbH, PsbI, PsbJ, PsbK, PsbL, PsbM, PsbT, PsbX, PsbY, PsbZ, Psb30/Ycf12, at least 3 peripheral proteins of the oxygen-evolving complex and a large number of cofactors. It forms dimeric complexes. The D1/D2 heterodimer binds P680, chlorophylls that are the primary electron donor of PSII, and subsequent electron acceptors. It shares a non-heme iron and each subunit binds pheophytin, quinone, additional chlorophylls, carotenoids and lipids. D1 provides most of the ligands for the Mn4-Ca-O5 cluster of the oxygen-evolving complex (OEC). There is also a Cl(-1) ion associated with D1 and D2, which is required for oxygen evolution. The PSII complex binds additional chlorophylls, carotenoids and specific lipids. serves as cofactor. Post-translationally, tyr-161 forms a radical intermediate that is referred to as redox-active TyrZ, YZ or Y-Z. In terms of processing, C-terminally processed by CTPA; processing is essential to allow assembly of the oxygen-evolving complex and thus photosynthetic growth.

The protein localises to the plastid. Its subcellular location is the chloroplast thylakoid membrane. It catalyses the reaction 2 a plastoquinone + 4 hnu + 2 H2O = 2 a plastoquinol + O2. In terms of biological role, photosystem II (PSII) is a light-driven water:plastoquinone oxidoreductase that uses light energy to abstract electrons from H(2)O, generating O(2) and a proton gradient subsequently used for ATP formation. It consists of a core antenna complex that captures photons, and an electron transfer chain that converts photonic excitation into a charge separation. The D1/D2 (PsbA/PsbD) reaction center heterodimer binds P680, the primary electron donor of PSII as well as several subsequent electron acceptors. The protein is Photosystem II protein D1 of Ostreococcus tauri.